We begin with the raw amino-acid sequence, 265 residues long: NAD kinase (265 aa).

The active-site Proton acceptor is the Asp45. NAD(+) contacts are provided by residues 45 to 46 (DG), 122 to 123 (NE), Arg148, Asp150, 161 to 166 (TAYSKS), and Ala185.

This sequence belongs to the NAD kinase family. Requires a divalent metal cation as cofactor.

It is found in the cytoplasm. It carries out the reaction NAD(+) + ATP = ADP + NADP(+) + H(+). In terms of biological role, involved in the regulation of the intracellular balance of NAD and NADP, and is a key enzyme in the biosynthesis of NADP. Catalyzes specifically the phosphorylation on 2'-hydroxyl of the adenosine moiety of NAD to yield NADP. This chain is NAD kinase, found in Lactobacillus delbrueckii subsp. bulgaricus (strain ATCC 11842 / DSM 20081 / BCRC 10696 / JCM 1002 / NBRC 13953 / NCIMB 11778 / NCTC 12712 / WDCM 00102 / Lb 14).